Reading from the N-terminus, the 702-residue chain is MADS-box MEF2 type transcription factor MIG1 (702 aa).

The region spanning 1 to 61 (MGRRKIEIKA…KKLYEYSSGD (61 aa)) is the MADS-box domain. Disordered stretches follow at residues 73-608 (GGAT…NIDT) and 658-702 (PSFL…KVDS). Over residues 86–96 (GGDDDDEEEGD) the composition is skewed to acidic residues. Positions 132–144 (ASPPIPNGVPFPP) are enriched in pro residues. A compositionally biased stretch (low complexity) spans 145 to 155 (HGHGVPRGHTP). The segment covering 180–195 (GSPQVNGFGFGQQQSM) has biased composition (polar residues). A compositionally biased stretch (pro residues) spans 201 to 241 (TTMPPHMPPQMAPGPPFPYPQHPQHPPHPPHPPHPPHPQQP). Composition is skewed to low complexity over residues 273 to 284 (PMGMQRHSVSPP), 326 to 343 (ESPQQIEPPQHQHQQQPE), and 350 to 371 (EQQQQQQQSQQSQQPQEPQSEP). Over residues 456–465 (VDESTSNASE) the composition is skewed to polar residues. Low complexity-rich tracts occupy residues 487-512 (RASISSVSSAPESAPAPPSRSNSLRA) and 530-553 (DGSGSATAESASSAQGGASTDATS). Over residues 554 to 567 (QSTRQNDSHSSTNM) the composition is skewed to polar residues. Pro residues predominate over residues 587–600 (PPNPFAPKRPPQHP). The span at 693 to 702 (NEPKRVKVDS) shows a compositional bias: basic and acidic residues.

It belongs to the MEF2 family. Interacts with MAPK MPS1.

It is found in the nucleus. Functionally, transcription factor acting downstream of the MPS1 MAP kinase (MAPK) cascade during conidiation and plant infection. Required for overcoming plant defense responses and the differentiation of secondary infectious hyphae in live plant cells. This Pyricularia oryzae (Rice blast fungus) protein is MADS-box MEF2 type transcription factor MIG1.